We begin with the raw amino-acid sequence, 351 residues long: Porphobilinogen deaminase (351 aa).

Residue Cys-242 is modified to S-(dipyrrolylmethanemethyl)cysteine. Residues 257–306 enclose the RPE1 insert domain; it reads PRHLSKLAYREVLEGNTEALATAAYKSNRTDASTGLTYKLPLEVEFGKVS.

This sequence belongs to the HMBS family. In terms of assembly, monomer. Dipyrromethane is required as a cofactor.

It carries out the reaction 4 porphobilinogen + H2O = hydroxymethylbilane + 4 NH4(+). The protein operates within porphyrin-containing compound metabolism; protoporphyrin-IX biosynthesis; coproporphyrinogen-III from 5-aminolevulinate: step 2/4. In terms of biological role, tetrapolymerization of the monopyrrole PBG into the hydroxymethylbilane pre-uroporphyrinogen in several discrete steps. The polypeptide is Porphobilinogen deaminase (Rickettsia conorii (strain ATCC VR-613 / Malish 7)).